The chain runs to 431 residues: Divergent protein kinase domain 1B (431 aa).

Residues 1–30 lie on the Cytoplasmic side of the membrane; sequence MRRLRRLVHLVLLCPFSKGLQGRLPGLRVK. A May mediate ER retention motif is present at residues 5-6; that stretch reads RR. The chain crosses the membrane as a helical span at residues 31-51; the sequence is YVLLVWLGIFVGSWMVYVHYS. The Lumenal segment spans residues 52-431; the sequence is SYSELCRGHV…WREISNTNYS (380 aa). 2 disulfides stabilise this stretch: Cys57–Cys94 and Cys62–Cys117.

It belongs to the DIPK family. In terms of processing, among the many cysteines in the lumenal domain, most are probably involved in disulfide bonds. In terms of tissue distribution, expressed in kidney, testis, lung, heart, stomach, intestine, pancreas, liver and salivary gland. Strongly expressed in acute pancreatitis, brain, and in peripheral endothelial cells.

Its subcellular location is the endoplasmic reticulum membrane. The sequence is that of Divergent protein kinase domain 1B (Dipk1b) from Mus musculus (Mouse).